The chain runs to 189 residues: Small ribosomal subunit protein uS7 (189 aa).

The protein belongs to the universal ribosomal protein uS7 family. Part of the 30S ribosomal subunit.

One of the primary rRNA binding proteins, it binds directly to 16S rRNA where it nucleates assembly of the head domain of the 30S subunit. Is located at the subunit interface close to the decoding center. The chain is Small ribosomal subunit protein uS7 from Methanosarcina mazei (strain ATCC BAA-159 / DSM 3647 / Goe1 / Go1 / JCM 11833 / OCM 88) (Methanosarcina frisia).